Reading from the N-terminus, the 1128-residue chain is Phytochrome A (1128 aa).

The segment covering 1 to 21 (MSSSRPTQCSSSSSRTRQSSR) has biased composition (low complexity). The interval 1 to 24 (MSSSRPTQCSSSSSRTRQSSRARI) is disordered. The region spanning 219–404 (SMEVLCNTVV…VFAVHVNKEF (186 aa)) is the GAF domain. Cys-324 contributes to the phytochromobilin binding site. 2 consecutive PAS domains span residues 620–690 (VTSE…LQGK) and 750–834 (VEGD…LAGD). Residues 904-1124 (YMRHAINNPL…TFILSVELAS (221 aa)) form the Histidine kinase domain.

This sequence belongs to the phytochrome family. In terms of assembly, homodimer. Contains one covalently linked phytochromobilin chromophore.

Functionally, regulatory photoreceptor which exists in two forms that are reversibly interconvertible by light: the Pr form that absorbs maximally in the red region of the spectrum and the Pfr form that absorbs maximally in the far-red region. Photoconversion of Pr to Pfr induces an array of morphogenic responses, whereas reconversion of Pfr to Pr cancels the induction of those responses. Pfr controls the expression of a number of nuclear genes including those encoding the small subunit of ribulose-bisphosphate carboxylase, chlorophyll A/B binding protein, protochlorophyllide reductase, rRNA, etc. It also controls the expression of its own gene(s) in a negative feedback fashion. This is Phytochrome A (PHYA) from Oryza sativa subsp. indica (Rice).